A 302-amino-acid chain; its full sequence is N-acetyl-D-glucosamine kinase (302 aa).

Residues 4–11 (GFDVGGTK) and 133–140 (GFGGGFIY) each bind ATP. Residues His-157, Cys-177, Cys-179, and Cys-184 each coordinate Zn(2+).

This sequence belongs to the ROK (NagC/XylR) family. NagK subfamily.

It carries out the reaction N-acetyl-D-glucosamine + ATP = N-acetyl-D-glucosamine 6-phosphate + ADP + H(+). The protein operates within cell wall biogenesis; peptidoglycan recycling. Functionally, catalyzes the phosphorylation of N-acetyl-D-glucosamine (GlcNAc) derived from cell-wall degradation, yielding GlcNAc-6-P. This chain is N-acetyl-D-glucosamine kinase, found in Vibrio parahaemolyticus serotype O3:K6 (strain RIMD 2210633).